We begin with the raw amino-acid sequence, 700 residues long: Polyribonucleotide nucleotidyltransferase (700 aa).

Mg(2+) contacts are provided by aspartate 491 and aspartate 497. In terms of domain architecture, KH spans 558–617; the sequence is PNYAVIEINPDKIRDVIGKGGATIRQLTEETGAVIDIDDAGTIRIFGENKAATKAAIAKI. The S1 motif domain maps to 627–695; it reads GKTYEGTVAR…NRGRIKLTMK (69 aa).

It belongs to the polyribonucleotide nucleotidyltransferase family. In terms of assembly, component of the RNA degradosome, which is a multiprotein complex involved in RNA processing and mRNA degradation. Mg(2+) is required as a cofactor.

The protein resides in the cytoplasm. The enzyme catalyses RNA(n+1) + phosphate = RNA(n) + a ribonucleoside 5'-diphosphate. Functionally, involved in mRNA degradation. Catalyzes the phosphorolysis of single-stranded polyribonucleotides processively in the 3'- to 5'-direction. This chain is Polyribonucleotide nucleotidyltransferase, found in Psychrobacter arcticus (strain DSM 17307 / VKM B-2377 / 273-4).